Reading from the N-terminus, the 377-residue chain is Transcription factor EC (377 aa).

One can recognise a bHLH domain in the interval 169-222 (QKKDNHNLIERRRRYNINYRIKELGTLIPKSNDPDMRWNKGTILKASVEYIKWL). Positions 349–377 (DPLLSSTSPAASKESSRRSSFSTDDGDDL) are disordered. Residues 353-370 (SSTSPAASKESSRRSSFS) show a composition bias toward low complexity.

The protein belongs to the MiT/TFE family.

It is found in the nucleus. Functionally, transcriptional regulator that acts as a repressor or an activator. Binds DNA. The polypeptide is Transcription factor EC (TFEC) (Gallus gallus (Chicken)).